Reading from the N-terminus, the 445-residue chain is Tubulin beta-1 chain (445 aa).

The short motif at 1-4 (MREI) is the MREI motif element. Positions 11, 69, 138, 142, 143, 144, 204, and 226 each coordinate GTP. Glutamate 69 is a binding site for Mg(2+). The interval 425-445 (YQDATAEEEGEFEEEGEEELA) is disordered. Over residues 429-445 (TAEEEGEFEEEGEEELA) the composition is skewed to acidic residues. Glutamate 438 is subject to 5-glutamyl polyglutamate.

It belongs to the tubulin family. In terms of assembly, dimer of alpha and beta chains. A typical microtubule is a hollow water-filled tube with an outer diameter of 25 nm and an inner diameter of 15 nM. Alpha-beta heterodimers associate head-to-tail to form protofilaments running lengthwise along the microtubule wall with the beta-tubulin subunit facing the microtubule plus end conferring a structural polarity. Microtubules usually have 13 protofilaments but different protofilament numbers can be found in some organisms and specialized cells. The cofactor is Mg(2+). In terms of processing, some glutamate residues at the C-terminus are polyglycylated, resulting in polyglycine chains on the gamma-carboxyl group. Glycylation is mainly limited to tubulin incorporated into axonemes (cilia and flagella) whereas glutamylation is prevalent in neuronal cells, centrioles, axonemes, and the mitotic spindle. Both modifications can coexist on the same protein on adjacent residues, and lowering polyglycylation levels increases polyglutamylation, and reciprocally. The precise function of polyglycylation is still unclear. Post-translationally, some glutamate residues at the C-terminus are polyglutamylated, resulting in polyglutamate chains on the gamma-carboxyl group. Polyglutamylation plays a key role in microtubule severing by spastin (SPAST). SPAST preferentially recognizes and acts on microtubules decorated with short polyglutamate tails: severing activity by SPAST increases as the number of glutamates per tubulin rises from one to eight, but decreases beyond this glutamylation threshold.

The protein localises to the cytoplasm. It is found in the cytoskeleton. In terms of biological role, tubulin is the major constituent of microtubules, a cylinder consisting of laterally associated linear protofilaments composed of alpha- and beta-tubulin heterodimers. Microtubules grow by the addition of GTP-tubulin dimers to the microtubule end, where a stabilizing cap forms. Below the cap, tubulin dimers are in GDP-bound state, owing to GTPase activity of alpha-tubulin. In Gadus morhua (Atlantic cod), this protein is Tubulin beta-1 chain.